The chain runs to 1610 residues: E3 ubiquitin-protein ligase listerin (1610 aa).

Residues 1–10 (MKKKSTDLYG) are compositionally biased toward basic and acidic residues. The tract at residues 1 to 20 (MKKKSTDLYGRKNPGMQSMS) is disordered. 12 HEAT repeats span residues 110 to 148 (LKIF…SDRA), 314 to 351 (VPML…NLIT), 372 to 408 (IGAM…EVYD), 409 to 443 (CLLN…RYFK), 590 to 626 (SPAF…SFDE), 627 to 664 (LENI…TAVF), 736 to 773 (KSLY…KALE), 965 to 1003 (GKMP…VVSN), 1119 to 1156 (CCFL…MSVV), 1322 to 1354 (RVYL…HAMD), 1355 to 1393 (LLRP…YSSA), and 1435 to 1473 (FTGY…KVNR). The segment at 1558–1604 (CAICYSVLSVERTLPNKRCGTCRHKFHASCLYKWFKSSNSSRCPLCR) adopts an RING-type; atypical zinc-finger fold.

This sequence belongs to the LTN1 family. In terms of assembly, component of the ribosome quality control complex (RQC), composed of the E3 ubiquitin ligase rkr1/ltn1, rqc1 and mtr1/rqc2, as well as cdc48 and its ubiquitin-binding cofactors. RQC forms a stable complex with 60S ribosomal subunits.

It is found in the nucleus. Its subcellular location is the cytoplasm. The protein localises to the cytosol. The enzyme catalyses S-ubiquitinyl-[E2 ubiquitin-conjugating enzyme]-L-cysteine + [acceptor protein]-L-lysine = [E2 ubiquitin-conjugating enzyme]-L-cysteine + N(6)-ubiquitinyl-[acceptor protein]-L-lysine.. Its pathway is protein modification; protein ubiquitination. In terms of biological role, E3 ubiquitin-protein ligase component of the ribosome quality control complex (RQC), a ribosome-associated complex that mediates ubiquitination and extraction of incompletely synthesized nascent chains for proteasomal degradation. Mediates ubiquitination of proteins derived from mRNAs lacking stop codons (non-stop proteins) and other translation arrest products induced by poly-lysine sequences and tandem rare codons. Ubiquitination leads to cdc48 recruitment for extraction and degradation of the incomplete translation product. May indirectly play a role in chromatin function and transcription. This chain is E3 ubiquitin-protein ligase listerin, found in Schizosaccharomyces pombe (strain 972 / ATCC 24843) (Fission yeast).